The chain runs to 184 residues: NADH-quinone oxidoreductase subunit B (184 aa).

[4Fe-4S] cluster is bound by residues C63, C64, C128, and C158.

Belongs to the complex I 20 kDa subunit family. As to quaternary structure, NDH-1 is composed of 14 different subunits. Subunits NuoB, C, D, E, F, and G constitute the peripheral sector of the complex. The cofactor is [4Fe-4S] cluster.

It is found in the cell inner membrane. The catalysed reaction is a quinone + NADH + 5 H(+)(in) = a quinol + NAD(+) + 4 H(+)(out). NDH-1 shuttles electrons from NADH, via FMN and iron-sulfur (Fe-S) centers, to quinones in the respiratory chain. Couples the redox reaction to proton translocation (for every two electrons transferred, four hydrogen ions are translocated across the cytoplasmic membrane), and thus conserves the redox energy in a proton gradient. This is NADH-quinone oxidoreductase subunit B from Xanthomonas campestris pv. campestris (strain 8004).